The primary structure comprises 259 residues: 4-hydroxy-tetrahydrodipicolinate reductase (259 aa).

NAD(+)-binding positions include 9-14 and E35; that span reads GAGGRM. R36 is an NADP(+) binding site. Residues 92-94 and 116-119 each bind NAD(+); these read GTT and APNM. H149 (proton donor/acceptor) is an active-site residue. Residue H150 participates in (S)-2,3,4,5-tetrahydrodipicolinate binding. The active-site Proton donor is K153. 159-160 contacts (S)-2,3,4,5-tetrahydrodipicolinate; that stretch reads GT.

Belongs to the DapB family.

Its subcellular location is the cytoplasm. It catalyses the reaction (S)-2,3,4,5-tetrahydrodipicolinate + NAD(+) + H2O = (2S,4S)-4-hydroxy-2,3,4,5-tetrahydrodipicolinate + NADH + H(+). The enzyme catalyses (S)-2,3,4,5-tetrahydrodipicolinate + NADP(+) + H2O = (2S,4S)-4-hydroxy-2,3,4,5-tetrahydrodipicolinate + NADPH + H(+). It functions in the pathway amino-acid biosynthesis; L-lysine biosynthesis via DAP pathway; (S)-tetrahydrodipicolinate from L-aspartate: step 4/4. Functionally, catalyzes the conversion of 4-hydroxy-tetrahydrodipicolinate (HTPA) to tetrahydrodipicolinate. The protein is 4-hydroxy-tetrahydrodipicolinate reductase of Oleidesulfovibrio alaskensis (strain ATCC BAA-1058 / DSM 17464 / G20) (Desulfovibrio alaskensis).